Reading from the N-terminus, the 352-residue chain is Protein RecA (352 aa).

66–73 (GPESSGKT) contributes to the ATP binding site. The interval 330-352 (TKDDSKVATVDKANEEQAAEPVQ) is disordered.

Belongs to the RecA family.

The protein localises to the cytoplasm. In terms of biological role, can catalyze the hydrolysis of ATP in the presence of single-stranded DNA, the ATP-dependent uptake of single-stranded DNA by duplex DNA, and the ATP-dependent hybridization of homologous single-stranded DNAs. It interacts with LexA causing its activation and leading to its autocatalytic cleavage. This chain is Protein RecA, found in Psychrobacter cryohalolentis (strain ATCC BAA-1226 / DSM 17306 / VKM B-2378 / K5).